Here is a 614-residue protein sequence, read N- to C-terminus: Lamin-2 (614 aa).

The span at 1-10 shows a compositional bias: basic residues; that stretch reads MSAQVSKKRG. Positions 1-51 are disordered; that stretch reads MSAQVSKKRGGSNPPKTGQHAASSTTSRTESSATSQTIYERQEVETRTQRT. A head region spans residues 1–76; that stretch reads MSAQVSKKRG…GTAGLAGSPL (76 aa). Residues 21 to 37 are compositionally biased toward low complexity; the sequence is AASSTTSRTESSATSQT. Residues 77 to 117 are coil 1A; that stretch reads SRHQEKEEFKLLNNRFANYIDTIRAQQEEISVLRRKVETVS. The region spanning 81 to 433 is the IF rod domain; that stretch reads EKEEFKLLNN…ALLRTEEERL (353 aa). A linker 1 region spans residues 118-128; it reads SKEVVENQKIK. Residues 129 to 268 are coil 1B; that stretch reads ERYNLEIANL…EEIVSLRNQR (140 aa). A linker 2 region spans residues 269 to 286; it reads RTEITEVETRMGEEYQSK. Residues 287-426 form a coil 2 region; it reads IVEQLNDLRA…AELATYNALL (140 aa). The tract at residues 427–611 is tail; that stretch reads RTEEERLNMK…ADSSDHQKNC (185 aa). Residues 433-454 form a disordered region; that stretch reads LNMKSPPFPSTPDSQRRGTKRR. A Nuclear localization signal motif is present at residues 449–458; it reads RGTKRRIADS. Residues 462 to 581 form the LTD domain; sequence TRFRNEASAT…VARREMTQSS (120 aa). Cysteine 611 is lipidated: S-farnesyl cysteine. Residues 612-614 constitute a propeptide, removed in mature form; sequence VIM.

Belongs to the intermediate filament family.

The protein localises to the nucleus inner membrane. Functionally, intermediate filament (IF) protein, component of the nuclear lamina, a fibrous layer on the nucleoplasmic side of the inner nuclear membrane, which is thought to provide a framework for the nuclear envelope. In Hypsibius exemplaris (Freshwater tardigrade), this protein is Lamin-2.